We begin with the raw amino-acid sequence, 337 residues long: MAVEMFYDDDADLSIIQGRKVAVIGYGSQGHAHSLSLRDSGVQVKVGLKEGSKSREKVTEQGLEVDTPAEVAKWADVIMLLAPDTAQAEIFTNDIEPNLEDGNALFFGHGLNIHFGLIKPPANVTVGMVAPKGPGHLVRRQFVDGKGVPCLIAIDQDPKGEGQALALSYAAAIGGARAGVIKTTFKEETETDLFGEQAVLCGGTEELVKTGFEVMVEAGYAPEMAYFEVLHELKLIVDLMYEGGIARMNYSVSDTAEFGGYLSGPRVIDADTKERMRAILKDIQDGTFVKRLVANVEGGNKELEDLRKKNAEHPIEVTGKKLRDLMSWVDRPITETA.

The KARI N-terminal Rossmann domain maps to 3-183; that stretch reads VEMFYDDDAD…GGARAGVIKT (181 aa). NADP(+)-binding positions include 26–29, K49, S52, S54, and 84–87; these read YGSQ and DTAQ. Residue H109 is part of the active site. NADP(+) is bound at residue G135. The KARI C-terminal knotted domain maps to 184–329; sequence TFKEETETDL…KKLRDLMSWV (146 aa). Residues D192, E196, E228, and E232 each coordinate Mg(2+). Residue S253 participates in substrate binding.

The protein belongs to the ketol-acid reductoisomerase family. Requires Mg(2+) as cofactor.

The enzyme catalyses (2R)-2,3-dihydroxy-3-methylbutanoate + NADP(+) = (2S)-2-acetolactate + NADPH + H(+). The catalysed reaction is (2R,3R)-2,3-dihydroxy-3-methylpentanoate + NADP(+) = (S)-2-ethyl-2-hydroxy-3-oxobutanoate + NADPH + H(+). It functions in the pathway amino-acid biosynthesis; L-isoleucine biosynthesis; L-isoleucine from 2-oxobutanoate: step 2/4. It participates in amino-acid biosynthesis; L-valine biosynthesis; L-valine from pyruvate: step 2/4. Its function is as follows. Involved in the biosynthesis of branched-chain amino acids (BCAA). Catalyzes an alkyl-migration followed by a ketol-acid reduction of (S)-2-acetolactate (S2AL) to yield (R)-2,3-dihydroxy-isovalerate. In the isomerase reaction, S2AL is rearranged via a Mg-dependent methyl migration to produce 3-hydroxy-3-methyl-2-ketobutyrate (HMKB). In the reductase reaction, this 2-ketoacid undergoes a metal-dependent reduction by NADPH to yield (R)-2,3-dihydroxy-isovalerate. This Mycobacterium sp. (strain JLS) protein is Ketol-acid reductoisomerase (NADP(+)).